A 495-amino-acid chain; its full sequence is Probable cytochrome P450 508C1 (495 aa).

The chain crosses the membrane as a helical span at residues leucine 3 to isoleucine 21. Cysteine 442 contacts heme.

The protein belongs to the cytochrome P450 family. The cofactor is heme.

The protein localises to the membrane. The polypeptide is Probable cytochrome P450 508C1 (cyp508C1) (Dictyostelium discoideum (Social amoeba)).